A 114-amino-acid polypeptide reads, in one-letter code: FK506-binding protein 1 (114 aa).

The PPIase FKBP-type domain maps to 26–114 (GDLVTIHYTG…VFDVELLKIN (89 aa)).

Belongs to the FKBP-type PPIase family. FKBP1 subfamily.

It localises to the cytoplasm. The enzyme catalyses [protein]-peptidylproline (omega=180) = [protein]-peptidylproline (omega=0). Its activity is regulated as follows. Inhibited by both FK506 and rapamycin. PPIases accelerate the folding of proteins. It catalyzes the cis-trans isomerization of proline imidic peptide bonds in oligopeptides. This Kluyveromyces lactis (strain ATCC 8585 / CBS 2359 / DSM 70799 / NBRC 1267 / NRRL Y-1140 / WM37) (Yeast) protein is FK506-binding protein 1 (FPR1).